The primary structure comprises 498 residues: Na(+)/H(+) exchange regulatory cofactor NHE-RF4 (498 aa).

PDZ domains follow at residues 49-130 (FCLL…LAQH), 157-235 (LCHV…AGLE), 263-346 (CLNI…VDPE), and 394-475 (QCFL…GARN). Phosphoserine is present on Ser-329.

As to quaternary structure, interacts with the C-terminal region of GUCY2C. Interacts with C-terminal region of SLC9A3 and the interactions decrease in response to elevated calcium ion levels. Interacts with the C-terminal region of SLC34A1. Interacts with USP2 isoform 2. Interacts (via the third PDZ domain) with SLC26A3 (via PDZ-binding motif). This interaction leads to decreased expression of SLC26A3 on the cell membrane resulting in its reduced exchanger activity. In terms of processing, phosphorylation at Ser-329 negatively regulates its interaction with SLC26A3. In terms of tissue distribution, expressed in kidney and small intestine. Not detected in heart, brain, spleen, lung, liver, skeletal muscle or testis.

The protein resides in the cell membrane. It is found in the cytoplasm. In terms of biological role, acts as a regulatory protein that associates with GUCY2C and negatively modulates its heat-stable enterotoxin-mediated activation. Stimulates SLC9A3 activity in the presence of elevated calcium ions. The polypeptide is Na(+)/H(+) exchange regulatory cofactor NHE-RF4 (Nherf4) (Mus musculus (Mouse)).